Consider the following 820-residue polypeptide: DNA mismatch repair protein MutS (820 aa).

ATP is bound at residue 618 to 625 (GPNMAGKS).

The protein belongs to the DNA mismatch repair MutS family.

Its function is as follows. This protein is involved in the repair of mismatches in DNA. It is possible that it carries out the mismatch recognition step. This protein has a weak ATPase activity. In Chlamydia trachomatis serovar A (strain ATCC VR-571B / DSM 19440 / HAR-13), this protein is DNA mismatch repair protein MutS.